The sequence spans 133 residues: Crossover junction endodeoxyribonuclease Hjc (133 aa).

Mg(2+) is bound at residue Glu12. Ser32 is an active-site residue. Positions 36 and 49 each coordinate Mg(2+).

It belongs to the Holliday junction resolvase Hjc family. Homodimer. Requires Mg(2+) as cofactor.

The catalysed reaction is Endonucleolytic cleavage at a junction such as a reciprocal single-stranded crossover between two homologous DNA duplexes (Holliday junction).. Its function is as follows. A structure-specific endonuclease that resolves Holliday junction (HJ) intermediates during genetic recombination. Cleaves 4-way DNA junctions introducing paired nicks in opposing strands, leaving a 5'-terminal phosphate and a 3'-terminal hydroxyl group that are subsequently ligated to produce recombinant products. The protein is Crossover junction endodeoxyribonuclease Hjc of Methanocaldococcus jannaschii (strain ATCC 43067 / DSM 2661 / JAL-1 / JCM 10045 / NBRC 100440) (Methanococcus jannaschii).